Here is a 332-residue protein sequence, read N- to C-terminus: MGKAAYHLPVMVREVVAWLVRRAGIYVDGTLGGGGHSLAILRALRDKGLEKGSFLIGIDQDSFAIAEAERTLASFRERTRLVQGNFREIADIVSTLRENQLRGMEVAGILLDLGVSSFQIDTSERGFSYLRSGPLDMRMEPDEGQSAADIVNTFEERELADIFFRFGEEKKSRRIASAICSWRNERGVIRGTQDLAAIVRSVVSVPDQQIKSLSRIFQALRIAVNDELGALESALKEGAASLSPQGRMAVMSYHSIEDRMVKHYFRTLAADDWGPKGVALREPLHKAAFTLVTRKALIAGDDEVNENSRARSAKMRVIERKMYSGEVSESDS.

S-adenosyl-L-methionine contacts are provided by residues 34 to 36 (GGH), Asp59, Phe86, Asp112, and Gln119.

This sequence belongs to the methyltransferase superfamily. RsmH family.

It localises to the cytoplasm. It catalyses the reaction cytidine(1402) in 16S rRNA + S-adenosyl-L-methionine = N(4)-methylcytidine(1402) in 16S rRNA + S-adenosyl-L-homocysteine + H(+). In terms of biological role, specifically methylates the N4 position of cytidine in position 1402 (C1402) of 16S rRNA. The protein is Ribosomal RNA small subunit methyltransferase H of Chlorobium phaeobacteroides (strain BS1).